A 418-amino-acid chain; its full sequence is N-acetylglucosamine-6-phosphate deacetylase (418 aa).

Glu-154 lines the a divalent metal cation pocket. Residue 165–166 (CH) participates in substrate binding. The a divalent metal cation site is built by His-223 and His-244. Substrate is bound by residues 247 to 248 (NA), Arg-255, and 281 to 284 (DGIH). The active-site Proton donor/acceptor is the Asp-306. 340 to 342 (TAG) is a binding site for substrate.

The protein belongs to the metallo-dependent hydrolases superfamily. NagA family. It depends on a divalent metal cation as a cofactor.

The enzyme catalyses N-acetyl-D-glucosamine 6-phosphate + H2O = D-glucosamine 6-phosphate + acetate. The chain is N-acetylglucosamine-6-phosphate deacetylase from Caenorhabditis elegans.